A 334-amino-acid polypeptide reads, in one-letter code: MSGFYHKHFLKLLDFTPAELNSLLQLAAKLKADKKSGKEEAKLTGKNIALIFEKDSTRTRCSFEVAAYDQGARVTYLGPSGSQIGHKESIKDTARVLGRMYDGIQYRGYGQEIAETLAEYAGVPVWNGLTNEFHPTQLLADLLTMQEHLPGKAFNEMTLVYAGDARNNMGNSMLEAAALTGLDLRLVAPQACWPEAALVTECRALAQQNGGNITLTEDVAKGVEGADFIYTDVWVSMGEAKEKWAERIALLRDYQVNSKMMQLTGNPEVKFLHCLPAFHDDQTTLGKKMAEEFGLHGGMEVTDEVFESAASIVFDQAENRMHTIKAVMVATLSK.

Carbamoyl phosphate-binding positions include 56–59 (STRT), Gln-83, Arg-107, and 134–137 (HPTQ). Residues Asn-168, Asp-232, and 236 to 237 (SM) each bind L-ornithine. Carbamoyl phosphate-binding positions include 274–275 (CL) and Arg-320.

The protein belongs to the aspartate/ornithine carbamoyltransferase superfamily. OTCase family.

The protein resides in the cytoplasm. It carries out the reaction carbamoyl phosphate + L-ornithine = L-citrulline + phosphate + H(+). Its pathway is amino-acid biosynthesis; L-arginine biosynthesis; L-arginine from L-ornithine and carbamoyl phosphate: step 1/3. In terms of biological role, reversibly catalyzes the transfer of the carbamoyl group from carbamoyl phosphate (CP) to the N(epsilon) atom of ornithine (ORN) to produce L-citrulline. The polypeptide is Ornithine carbamoyltransferase (Shigella boydii serotype 4 (strain Sb227)).